A 287-amino-acid polypeptide reads, in one-letter code: Diphthine methyl ester synthase (287 aa).

S-adenosyl-L-methionine-binding positions include L9, D84, G87, 112-113 (SI), V163, V221, and H248.

This sequence belongs to the diphthine synthase family.

The protein resides in the cytoplasm. It catalyses the reaction 2-[(3S)-amino-3-carboxypropyl]-L-histidyl-[translation elongation factor 2] + 4 S-adenosyl-L-methionine = diphthine methyl ester-[translation elongation factor 2] + 4 S-adenosyl-L-homocysteine + 3 H(+). It participates in protein modification; peptidyl-diphthamide biosynthesis. Functionally, S-adenosyl-L-methionine-dependent methyltransferase that catalyzes four methylations of the modified target histidine residue in translation elongation factor 2 (EF-2), to form an intermediate called diphthine methyl ester. The four successive methylation reactions represent the second step of diphthamide biosynthesis. The protein is Diphthine methyl ester synthase (DPH5) of Gibberella zeae (strain ATCC MYA-4620 / CBS 123657 / FGSC 9075 / NRRL 31084 / PH-1) (Wheat head blight fungus).